The chain runs to 121 residues: Small ribosomal subunit protein uS13 (121 aa).

The disordered stretch occupies residues 94 to 121 (GLPVRGQNTKNNARTRKGPRRTVANKKK). The span at 106–121 (ARTRKGPRRTVANKKK) shows a compositional bias: basic residues.

It belongs to the universal ribosomal protein uS13 family. As to quaternary structure, part of the 30S ribosomal subunit. Forms a loose heterodimer with protein S19. Forms two bridges to the 50S subunit in the 70S ribosome.

Located at the top of the head of the 30S subunit, it contacts several helices of the 16S rRNA. In the 70S ribosome it contacts the 23S rRNA (bridge B1a) and protein L5 of the 50S subunit (bridge B1b), connecting the 2 subunits; these bridges are implicated in subunit movement. Contacts the tRNAs in the A and P-sites. The sequence is that of Small ribosomal subunit protein uS13 from Geobacillus kaustophilus (strain HTA426).